Reading from the N-terminus, the 735-residue chain is Cyclic nucleotide-gated channel cone photoreceptor subunit alpha (735 aa).

Residues 1 to 214 lie on the Cytoplasmic side of the membrane; the sequence is MAKINTQHSY…PSSNMYYNWL (214 aa). A disordered region spans residues 142–191; that stretch reads VNFSNNTNEDKKEEKKEVKEEKKEEKKEEKKEEKKDDKKDDKKDDKKDDK. Basic and acidic residues predominate over residues 149-191; it reads NEDKKEEKKEVKEEKKEEKKEEKKEEKKDDKKDDKKDDKKDDK. A helical membrane pass occupies residues 215 to 236; sequence TIIAAPVFYNWCMLICRACFDE. At 237 to 246 the chain is on the extracellular side; sequence LQIDHIKLWL. Residues 247–267 form a helical membrane-spanning segment; sequence FLDYCSDIIYVFDMFVRFRTG. Residues 268–292 are Cytoplasmic-facing; sequence FLEQGLLVKDEKKLRDHYTQTVQFK. A helical membrane pass occupies residues 293 to 311; sequence LDVLSLLPTDLAYLKLGLN. Residues 312-316 lie on the Extracellular side of the membrane; that stretch reads YPELR. A helical transmembrane segment spans residues 317 to 335; that stretch reads FNRLLRIARLFEFFDRTET. Over 336–342 the chain is Cytoplasmic; sequence RTNYPNM. A helical membrane pass occupies residues 343 to 366; that stretch reads FRIGNLVLYILIIIHWNACIYFAI. At 367-389 the chain is on the extracellular side; the sequence is SKVIGFGTDSWVYPNVSIPEYGR. The next 2 helical transmembrane spans lie at 390–424 and 425–449; these read LSRKYIYSLYWSTLTLTTIGETPPPVKDEEYLFVV and IDFLVGVLIFATIVGNVGSMISNMN. The Cytoplasmic segment spans residues 450 to 735; sequence ASRAEFQAKV…PEKPEEQKKD (286 aa). 3',5'-cyclic GMP is bound by residues 532-654, Glu-591, and Arg-606; that span reads LLIE…DNLI. A disordered region spans residues 715–735; the sequence is GSGSLSVGEPEPEKPEEQKKD. Positions 725–735 are enriched in basic and acidic residues; the sequence is EPEKPEEQKKD.

It belongs to the cyclic nucleotide-gated cation channel (TC 1.A.1.5) family.

It localises to the membrane. Its function is as follows. Visual signal transduction is mediated by a G-protein coupled cascade using cGMP as second messenger. This protein can be activated by cyclic GMP which leads to an opening of the cation channel and thereby causing a depolarization of cone photoreceptors. This chain is Cyclic nucleotide-gated channel cone photoreceptor subunit alpha, found in Gallus gallus (Chicken).